Here is a 927-residue protein sequence, read N- to C-terminus: Autophagy-related protein 18h (927 aa).

Disordered stretches follow at residues 1-25 (MKSN…NGTN) and 333-353 (DGPG…VGSH). Residues 335-344 (PGPSLSSSPG) are compositionally biased toward low complexity. 2 WD repeats span residues 379–419 (AHTS…TKNG) and 441–482 (MTSA…NVLE). 2 disordered regions span residues 750-788 (NRGF…EERR) and 844-927 (IENS…SEEG). A compositionally biased stretch (low complexity) spans 846–859 (NSSGISGDSNVSSN). The span at 896–907 (ETEHKDAPSDGK) shows a compositional bias: basic and acidic residues.

Belongs to the WD repeat PROPPIN family. Component of the PI(3,5)P2 regulatory complex at least composed of ATG18, SAC/FIG4, FAB1 and VAC14. In terms of tissue distribution, expressed in roots, flowers and leaves.

The protein resides in the preautophagosomal structure membrane. The protein localises to the vacuole membrane. Functionally, the PI(3,5)P2 regulatory complex regulates both the synthesis and turnover of phosphatidylinositol 3,5-bisphosphate (PtdIns(3,5)P2). Required for autophagy. The protein is Autophagy-related protein 18h (ATG18H) of Arabidopsis thaliana (Mouse-ear cress).